The primary structure comprises 564 residues: Dihydroxy-acid dehydratase (564 aa).

Asp80 provides a ligand contact to Mg(2+). Cys121 provides a ligand contact to [2Fe-2S] cluster. Asp122 and Lys123 together coordinate Mg(2+). Lys123 carries the post-translational modification N6-carboxylysine. Cys194 contributes to the [2Fe-2S] cluster binding site. Mg(2+) is bound at residue Glu447. Ser473 acts as the Proton acceptor in catalysis.

The protein belongs to the IlvD/Edd family. Homodimer. Requires [2Fe-2S] cluster as cofactor. It depends on Mg(2+) as a cofactor.

The enzyme catalyses (2R)-2,3-dihydroxy-3-methylbutanoate = 3-methyl-2-oxobutanoate + H2O. It catalyses the reaction (2R,3R)-2,3-dihydroxy-3-methylpentanoate = (S)-3-methyl-2-oxopentanoate + H2O. It participates in amino-acid biosynthesis; L-isoleucine biosynthesis; L-isoleucine from 2-oxobutanoate: step 3/4. Its pathway is amino-acid biosynthesis; L-valine biosynthesis; L-valine from pyruvate: step 3/4. Its function is as follows. Functions in the biosynthesis of branched-chain amino acids. Catalyzes the dehydration of (2R,3R)-2,3-dihydroxy-3-methylpentanoate (2,3-dihydroxy-3-methylvalerate) into 2-oxo-3-methylpentanoate (2-oxo-3-methylvalerate) and of (2R)-2,3-dihydroxy-3-methylbutanoate (2,3-dihydroxyisovalerate) into 2-oxo-3-methylbutanoate (2-oxoisovalerate), the penultimate precursor to L-isoleucine and L-valine, respectively. The protein is Dihydroxy-acid dehydratase of Listeria monocytogenes serotype 4b (strain CLIP80459).